The sequence spans 112 residues: Divalent-cation tolerance protein CutA (112 aa).

Residues cysteine 16, histidine 83, and histidine 84 each contribute to the Cu cation site.

It belongs to the CutA family. In terms of assembly, homotrimer. Cu cation serves as cofactor.

Its subcellular location is the cytoplasm. Its function is as follows. Involved in resistance toward heavy metals. The polypeptide is Divalent-cation tolerance protein CutA (Shigella boydii serotype 18 (strain CDC 3083-94 / BS512)).